Here is a 424-residue protein sequence, read N- to C-terminus: Serine--tRNA ligase (424 aa).

231 to 233 (TAE) serves as a coordination point for L-serine. 262 to 264 (RAE) is a binding site for ATP. Glu-285 serves as a coordination point for L-serine. 349–352 (EISS) provides a ligand contact to ATP. L-serine is bound at residue Ser-385.

This sequence belongs to the class-II aminoacyl-tRNA synthetase family. Type-1 seryl-tRNA synthetase subfamily. In terms of assembly, homodimer. The tRNA molecule binds across the dimer.

It is found in the cytoplasm. The catalysed reaction is tRNA(Ser) + L-serine + ATP = L-seryl-tRNA(Ser) + AMP + diphosphate + H(+). It carries out the reaction tRNA(Sec) + L-serine + ATP = L-seryl-tRNA(Sec) + AMP + diphosphate + H(+). The protein operates within aminoacyl-tRNA biosynthesis; selenocysteinyl-tRNA(Sec) biosynthesis; L-seryl-tRNA(Sec) from L-serine and tRNA(Sec): step 1/1. Catalyzes the attachment of serine to tRNA(Ser). Is also able to aminoacylate tRNA(Sec) with serine, to form the misacylated tRNA L-seryl-tRNA(Sec), which will be further converted into selenocysteinyl-tRNA(Sec). The protein is Serine--tRNA ligase of Geobacillus sp. (strain WCH70).